The following is a 237-amino-acid chain: UPF0280 protein Mbur_0309 (237 aa).

This sequence belongs to the UPF0280 family.

This chain is UPF0280 protein Mbur_0309, found in Methanococcoides burtonii (strain DSM 6242 / NBRC 107633 / OCM 468 / ACE-M).